Here is a 258-residue protein sequence, read N- to C-terminus: Adenosylcobinamide-GDP ribazoletransferase (258 aa).

Transmembrane regions (helical) follow at residues 41-61 (FFPLVGWLVGAAGALAYWLAS), 65-85 (PAPGVAVAASMAATLLLTGAF), 115-135 (IGAFGAIAVCMALLLKWQLLM), 136-156 (AMAAQHAAAAMAAMVAAHAAS), 197-217 (LPLLGFGMACAAIAVAVLLAA), and 236-256 (CLGLAQQVFELLVLWVLLAWT).

It belongs to the CobS family. The cofactor is Mg(2+).

It localises to the cell inner membrane. It carries out the reaction alpha-ribazole + adenosylcob(III)inamide-GDP = adenosylcob(III)alamin + GMP + H(+). The enzyme catalyses alpha-ribazole 5'-phosphate + adenosylcob(III)inamide-GDP = adenosylcob(III)alamin 5'-phosphate + GMP + H(+). It functions in the pathway cofactor biosynthesis; adenosylcobalamin biosynthesis; adenosylcobalamin from cob(II)yrinate a,c-diamide: step 7/7. Functionally, joins adenosylcobinamide-GDP and alpha-ribazole to generate adenosylcobalamin (Ado-cobalamin). Also synthesizes adenosylcobalamin 5'-phosphate from adenosylcobinamide-GDP and alpha-ribazole 5'-phosphate. This Ralstonia nicotianae (strain ATCC BAA-1114 / GMI1000) (Ralstonia solanacearum) protein is Adenosylcobinamide-GDP ribazoletransferase.